We begin with the raw amino-acid sequence, 271 residues long: Pyrroline-5-carboxylate reductase (271 aa).

This sequence belongs to the pyrroline-5-carboxylate reductase family.

It localises to the cytoplasm. The enzyme catalyses L-proline + NADP(+) = (S)-1-pyrroline-5-carboxylate + NADPH + 2 H(+). It carries out the reaction L-proline + NAD(+) = (S)-1-pyrroline-5-carboxylate + NADH + 2 H(+). Its pathway is amino-acid biosynthesis; L-proline biosynthesis; L-proline from L-glutamate 5-semialdehyde: step 1/1. Catalyzes the reduction of 1-pyrroline-5-carboxylate (PCA) to L-proline. The sequence is that of Pyrroline-5-carboxylate reductase from Staphylococcus haemolyticus (strain JCSC1435).